We begin with the raw amino-acid sequence, 96 residues long: Cytochrome c oxidase assembly factor 3 homolog, mitochondrial (96 aa).

Residues 1 to 50 (MSSQGEPKPEAQFAKRIDPTKEALTKEQLQFIRQVEMAQWKKKTDKLRGR) are Mitochondrial matrix-facing. Residues 51–73 (NVATGLAIGAVVLGIYGYTFYSV) form a helical membrane-spanning segment. The Mitochondrial intermembrane segment spans residues 74–96 (SQEKIMDEIDEEAKVRVPKTGAN).

It belongs to the COA3 family. Core component of the MITRAC (mitochondrial translation regulation assembly intermediate of cytochrome c oxidase complex) complex.

The protein localises to the mitochondrion inner membrane. In terms of biological role, core component of the MITRAC (mitochondrial translation regulation assembly intermediate of cytochrome c oxidase complex) complex, that regulates cytochrome c oxidase assembly. MITRAC complexes regulate both translation of mitochondrial encoded components and assembly of nuclear-encoded components imported in mitochondrion. Required for efficient translation of MT-CO1 and mitochondrial respiratory chain complex IV assembly. The polypeptide is Cytochrome c oxidase assembly factor 3 homolog, mitochondrial (coa3a) (Danio rerio (Zebrafish)).